Here is a 242-residue protein sequence, read N- to C-terminus: Myogenic factor 6 (242 aa).

Residues 31–63 (SPLYPGSDGTLSPCQDQMPPEAGSDSSGEEHVL) form a disordered region. The bHLH domain maps to 93 to 144 (DRRKAATLRERRRLKKINEAFEALKRRTVANPNQRLPKVEILRSAINYIERL).

In terms of assembly, efficient DNA binding requires dimerization with another bHLH protein. Interacts with CSRP3.

It localises to the nucleus. In terms of biological role, involved in muscle differentiation (myogenic factor). Induces fibroblasts to differentiate into myoblasts. Probable sequence specific DNA-binding protein. In Bos taurus (Bovine), this protein is Myogenic factor 6 (MYF6).